The sequence spans 1206 residues: DNA-directed RNA polymerase subunit beta' (1206 aa).

Cys-60, Cys-62, Cys-75, and Cys-78 together coordinate Zn(2+). Positions 449, 451, and 453 each coordinate Mg(2+). Positions 818, 892, 899, and 902 each coordinate Zn(2+).

It belongs to the RNA polymerase beta' chain family. In terms of assembly, the RNAP catalytic core consists of 2 alpha, 1 beta, 1 beta' and 1 omega subunit. When a sigma factor is associated with the core the holoenzyme is formed, which can initiate transcription. Mg(2+) is required as a cofactor. Zn(2+) serves as cofactor.

It catalyses the reaction RNA(n) + a ribonucleoside 5'-triphosphate = RNA(n+1) + diphosphate. Functionally, DNA-dependent RNA polymerase catalyzes the transcription of DNA into RNA using the four ribonucleoside triphosphates as substrates. This chain is DNA-directed RNA polymerase subunit beta', found in Shouchella clausii (strain KSM-K16) (Alkalihalobacillus clausii).